A 311-amino-acid chain; its full sequence is Olfactory receptor 6C3 (311 aa).

Residues 1–22 lie on the Extracellular side of the membrane; that stretch reads MNHTMVTEFVLLGLSDDPDLQI. N-linked (GlcNAc...) asparagine glycosylation occurs at Asn2. A helical membrane pass occupies residues 23–43; the sequence is VIFLFLFITYILSVTGNLTII. The Cytoplasmic segment spans residues 44 to 51; sequence TLTFVDSH. Residues 52-72 form a helical membrane-spanning segment; that stretch reads LQTPMYFFLRNFSFLEISFTT. The Extracellular portion of the chain corresponds to 73-96; that stretch reads VCIPRFLGAIITRNKTISYNNCAA. A disulfide bridge links Cys94 with Cys186. The helical transmembrane segment at 97–117 threads the bilayer; the sequence is QLFFFIFMGVTEFYILTAMSY. Residues 118 to 136 are Cytoplasmic-facing; that stretch reads DRYVAICKPLHYTSIMNRK. The helical transmembrane segment at 137–157 threads the bilayer; that stretch reads LCTLLVLCAWLSGFLTIFPPL. The Extracellular segment spans residues 158 to 194; the sequence is MLLLQLDYCASNVIDHFACDYFPLLQLSCSDTWLLEV. A helical transmembrane segment spans residues 195-214; sequence IGFYFALVTLLFTLALVILS. Residues 215-234 are Cytoplasmic-facing; it reads YMYIIRTILRIPSASQRKKA. Residues 235–255 form a helical membrane-spanning segment; the sequence is FSTCSSHMIVISISYGSCIFM. Residues 256 to 268 are Extracellular-facing; sequence YANPSAKEKASLT. A helical membrane pass occupies residues 269–289; that stretch reads KGIAILNTSVAPMLNPFIYTL. Residues 290 to 311 are Cytoplasmic-facing; it reads RNQQVKQAFKNVVHKVVFYANQ.

Belongs to the G-protein coupled receptor 1 family.

The protein resides in the cell membrane. Functionally, odorant receptor. The sequence is that of Olfactory receptor 6C3 (OR6C3) from Homo sapiens (Human).